We begin with the raw amino-acid sequence, 101 residues long: MIPGELMPAAGDLTLNEGAEALTLMVANTGDRPVQVGSHYHFAEANPALDFDREAARGLRLDIAAGTAVRFEPGQRREVPLIPIGGARRIFGFNAEIMGDL.

It belongs to the urease beta subunit family. In terms of assembly, heterotrimer of UreA (gamma), UreB (beta) and UreC (alpha) subunits. Three heterotrimers associate to form the active enzyme.

It localises to the cytoplasm. The enzyme catalyses urea + 2 H2O + H(+) = hydrogencarbonate + 2 NH4(+). The protein operates within nitrogen metabolism; urea degradation; CO(2) and NH(3) from urea (urease route): step 1/1. The protein is Urease subunit beta of Ruegeria sp. (strain TM1040) (Silicibacter sp.).